Here is a 304-residue protein sequence, read N- to C-terminus: Dermonecrotic toxin LiSicTox-betaIA1i (304 aa).

The signal sequence occupies residues 1–21 (MLLPAVISFIVYAVFLQEANG). The propeptide occupies 22-26 (HAAER). Histidine 38 is a catalytic residue. Residues glutamate 58 and aspartate 60 each coordinate Mg(2+). Residue histidine 74 is the Nucleophile of the active site. 2 cysteine pairs are disulfide-bonded: cysteine 78–cysteine 84 and cysteine 80–cysteine 223. Position 118 (aspartate 118) interacts with Mg(2+).

It belongs to the arthropod phospholipase D family. Class II subfamily. Class IIb sub-subfamily. Mg(2+) is required as a cofactor. In terms of tissue distribution, expressed by the venom gland.

The protein localises to the secreted. It catalyses the reaction an N-(acyl)-sphingosylphosphocholine = an N-(acyl)-sphingosyl-1,3-cyclic phosphate + choline. The enzyme catalyses an N-(acyl)-sphingosylphosphoethanolamine = an N-(acyl)-sphingosyl-1,3-cyclic phosphate + ethanolamine. The catalysed reaction is a 1-acyl-sn-glycero-3-phosphocholine = a 1-acyl-sn-glycero-2,3-cyclic phosphate + choline. It carries out the reaction a 1-acyl-sn-glycero-3-phosphoethanolamine = a 1-acyl-sn-glycero-2,3-cyclic phosphate + ethanolamine. In terms of biological role, dermonecrotic toxins cleave the phosphodiester linkage between the phosphate and headgroup of certain phospholipids (sphingolipid and lysolipid substrates), forming an alcohol (often choline) and a cyclic phosphate. This toxin acts on sphingomyelin (SM) with low activity. It may also act on ceramide phosphoethanolamine (CPE), lysophosphatidylcholine (LPC) and lysophosphatidylethanolamine (LPE), but not on lysophosphatidylserine (LPS), and lysophosphatidylglycerol (LPG). It acts by transphosphatidylation, releasing exclusively cyclic phosphate products as second products. Induces inflammatory response but no or very weak hemolysis, dermonecrosis, vascular permeability, edema, and cytotoxicity against renal epithelial cells. Causes swelling and erythema. In vivo, is not lethal to mice when intraperitoneally injected. This chain is Dermonecrotic toxin LiSicTox-betaIA1i, found in Loxosceles intermedia (Brown spider).